The chain runs to 483 residues: PRAME family member 12 (483 aa).

An LRR 1; degenerate repeat occupies 97–122 (RWKLQVLDLRNVDENFWGIWSGASAL). One copy of the LRR 2; degenerate repeat lies at 177 to 201 (HVCCKELQIFGIAIHRIIEVLNTVE). The LRR 3; degenerate repeat unit spans residues 202–228 (LDCIQEVEVCCPWELSILIRFAPYLGQ). The LRR 4; degenerate repeat unit spans residues 229-264 (MRNLRKLVLFNIHVSACIPLDRKEQFVIQFTSQFLK). LRR repeat units lie at residues 265-290 (LDYFQKLYMHSVSFLEGHLDQLLRCL), 291-322 (QAPLETVVMTECLLSESDLKHLSWCPSIRQLK), 323-341 (ELDLRGITLTHFSPEPLSV), 347-374 (EATLQTLDLEDCGIVDSQLSAILPALSR), and 375-399 (CSQLSTFSFCGNLISMAALENLLRH).

Belongs to the PRAME family.

In Homo sapiens (Human), this protein is PRAME family member 12.